The sequence spans 289 residues: Probable protein phosphatase 2C 39 (289 aa).

The 248-residue stretch at 41 to 288 folds into the PPM-type phosphatase domain; the sequence is THGFHLVKGK…DDISVVVVKF (248 aa). Mn(2+)-binding residues include Asp78, Gly79, Asp240, and Asp279.

Belongs to the PP2C family. Mg(2+) is required as a cofactor. It depends on Mn(2+) as a cofactor.

It catalyses the reaction O-phospho-L-seryl-[protein] + H2O = L-seryl-[protein] + phosphate. It carries out the reaction O-phospho-L-threonyl-[protein] + H2O = L-threonyl-[protein] + phosphate. This Arabidopsis thaliana (Mouse-ear cress) protein is Probable protein phosphatase 2C 39.